We begin with the raw amino-acid sequence, 581 residues long: Bifunctional lycopene cyclase/phytoene synthase (581 aa).

Positions 1 to 243 (MGFDYALVHL…IVFGQLAFDN (243 aa)) are lycopene beta-cyclase. A run of 7 helical transmembrane segments spans residues 3–23 (FDYA…LTLL), 35–55 (KVAF…SYLI), 65–85 (HVII…FFVV), 120–140 (LKRL…WFCV), 152–172 (ILIW…QFII), 173–193 (GLPF…LWIV), and 221–241 (IEEA…QLAF). Residues 250-581 (AFPHLFPDPS…RVLVAWRTLN (332 aa)) are phytoene synthase.

It in the N-terminal section; belongs to the lycopene beta-cyclase family. In the C-terminal section; belongs to the phytoene/squalene synthase family.

The protein localises to the membrane. It catalyses the reaction all-trans-lycopene = gamma-carotene. It carries out the reaction gamma-carotene = all-trans-beta-carotene. The catalysed reaction is 2 (2E,6E,10E)-geranylgeranyl diphosphate = 15-cis-phytoene + 2 diphosphate. It participates in carotenoid biosynthesis; beta-carotene biosynthesis. Its pathway is carotenoid biosynthesis; phytoene biosynthesis; all-trans-phytoene from geranylgeranyl diphosphate: step 1/1. Functionally, bifunctional enzyme that catalyzes the reactions from geranylgeranyl diphosphate to phytoene (phytoene synthase) and lycopene to beta-carotene via the intermediate gamma-carotene (lycopene cyclase). This is Bifunctional lycopene cyclase/phytoene synthase from Leptosphaeria maculans (strain JN3 / isolate v23.1.3 / race Av1-4-5-6-7-8) (Blackleg fungus).